The sequence spans 109 residues: uncharacterized protein (109 aa).

This is an uncharacterized protein from Methanocaldococcus jannaschii (strain ATCC 43067 / DSM 2661 / JAL-1 / JCM 10045 / NBRC 100440) (Methanococcus jannaschii).